Reading from the N-terminus, the 218-residue chain is Attacin-B (218 aa).

An N-terminal signal peptide occupies residues 1 to 17; sequence MQKTSILILALFAIAEA. Residues 18–28 constitute a propeptide that is removed on maturation; it reads VPTTGPIRVRR.

Belongs to the attacin/sarcotoxin-2 family. As to expression, hemolymph (at protein level).

The protein resides in the secreted. In terms of biological role, hemolymph antibacterial protein. This Drosophila melanogaster (Fruit fly) protein is Attacin-B (AttB).